We begin with the raw amino-acid sequence, 267 residues long: Zerumbone synthase (267 aa).

9–33 (LVTGGASGIGESIARLFIEHGAKIC) contributes to the NAD(+) binding site. Serine 142 is a substrate binding site. Residue tyrosine 155 is the Proton acceptor of the active site.

The protein belongs to the short-chain dehydrogenases/reductases (SDR) family. In terms of tissue distribution, expressed in leaves, stems and rhizomes.

It catalyses the reaction 10-hydroxy-alpha-humulene + NAD(+) = zerumbone + NADH + H(+). In terms of biological role, catalyzes 8-hydroxy-alpha-humulene into zerumbone in presence of NAD. Also converts borneol to camphor in vitro. Zerumbone is a highly promising multi-anticancer agent. This chain is Zerumbone synthase (ZSD1), found in Zingiber zerumbet (Shampoo ginger).